Consider the following 440-residue polypeptide: Protein disulfide-isomerase 5-2 (440 aa).

Residues Met1–Ser23 form the signal peptide. The Thioredoxin domain maps to Ser24–Ala139. Catalysis depends on nucleophile residues Cys61 and Cys64. The cysteines at positions 61 and 64 are disulfide-linked. Residue Thr160 is modified to Phosphothreonine. Asn171 carries an N-linked (GlcNAc...) asparagine glycan. The helical transmembrane segment at Ser376–Leu396 threads the bilayer. The interval Thr406–Asp440 is disordered. The span at Ser430–Asp440 shows a compositional bias: basic and acidic residues.

It belongs to the protein disulfide isomerase family. In terms of tissue distribution, widely expressed.

Its subcellular location is the membrane. Functionally, acts as a protein-folding catalyst that interacts with nascent polypeptides to catalyze the formation, isomerization, and reduction or oxidation of disulfide bonds. The polypeptide is Protein disulfide-isomerase 5-2 (PDIL5-2) (Arabidopsis thaliana (Mouse-ear cress)).